A 316-amino-acid chain; its full sequence is UPF0613 protein PB24D3.06c (316 aa).

This sequence belongs to the UPF0613 family.

It is found in the cytoplasm. The protein localises to the nucleus. This is UPF0613 protein PB24D3.06c from Schizosaccharomyces pombe (strain 972 / ATCC 24843) (Fission yeast).